A 329-amino-acid polypeptide reads, in one-letter code: MNSETLPAELPATLTIASRESRLAMWQAEHVRDALRKLYPACDVKILGMTTRGDQILDRTLSKVGGKGLFVKELESALADGRADLAVHSLKDVPMVLPEGFALAAVMSREDPRDAFVSNDYASLDALPAGAVVGTSSLRREAMLRARHPRLDVRPLRGNLDTRLAKLDRGDYAAIILAAAGLKRLGLAARIRALLDVDDSLPAAGQGALGIEIAARRADVAAWLAPLHDHASALAVEAERAVSRALGGSCEVPLAAHAVWRGGELHLTGSVSTTDGARVLAAHAHARAATAADALALGRRVSDALERQGARAIVDALVAASAQAQKGGA.

Cys250 carries the post-translational modification S-(dipyrrolylmethanemethyl)cysteine.

This sequence belongs to the HMBS family. In terms of assembly, monomer. It depends on dipyrromethane as a cofactor.

The catalysed reaction is 4 porphobilinogen + H2O = hydroxymethylbilane + 4 NH4(+). Its pathway is porphyrin-containing compound metabolism; protoporphyrin-IX biosynthesis; coproporphyrinogen-III from 5-aminolevulinate: step 2/4. In terms of biological role, tetrapolymerization of the monopyrrole PBG into the hydroxymethylbilane pre-uroporphyrinogen in several discrete steps. The chain is Porphobilinogen deaminase from Burkholderia pseudomallei (strain 668).